The following is a 301-amino-acid chain: Haloalkane dehalogenase (301 aa).

The active-site Nucleophile is Asp-123. Asp-250 functions as the Proton donor in the catalytic mechanism. His-279 functions as the Proton acceptor in the catalytic mechanism.

The protein belongs to the haloalkane dehalogenase family. Type 1 subfamily. In terms of assembly, monomer.

The enzyme catalyses 1-haloalkane + H2O = a halide anion + a primary alcohol + H(+). Functionally, catalyzes hydrolytic cleavage of carbon-halogen bonds in halogenated aliphatic compounds, leading to the formation of the corresponding primary alcohols, halide ions and protons. The polypeptide is Haloalkane dehalogenase (Phenylobacterium zucineum (strain HLK1)).